A 521-amino-acid polypeptide reads, in one-letter code: Protein YjiT (521 aa).

The protein is Protein YjiT (yjiT) of Escherichia coli (strain K12).